The following is a 95-amino-acid chain: Small ribosomal subunit protein uS19 (95 aa).

The tract at residues 76–95 (PTRRFGGHADKKAATKGQVR) is disordered.

Belongs to the universal ribosomal protein uS19 family.

Protein S19 forms a complex with S13 that binds strongly to the 16S ribosomal RNA. The polypeptide is Small ribosomal subunit protein uS19 (Pseudothermotoga lettingae (strain ATCC BAA-301 / DSM 14385 / NBRC 107922 / TMO) (Thermotoga lettingae)).